Here is a 294-residue protein sequence, read N- to C-terminus: Formate dehydrogenase, nitrate-inducible, iron-sulfur subunit (294 aa).

Residues 1–256 (MAMETQDIIK…DTSVSLWKGA (256 aa)) lie on the Periplasmic side of the membrane. 4Fe-4S ferredoxin-type domains lie at 30–58 (VAKL…IRDE), 91–123 (LEWL…QYAN), 124–153 (GIVD…LNKE), and 158–189 (YKCT…FGTK). [4Fe-4S] cluster is bound by residues Cys39, Cys42, Cys45, Cys49, Cys100, Cys103, Cys108, Cys112, Cys133, Cys136, Cys139, Cys143, Cys160, Cys163, Cys175, and Cys179. The helical transmembrane segment at 257–279 (LKPLAAAGFIATFAGLIFHYIGI) threads the bilayer. The Cytoplasmic portion of the chain corresponds to 280–294 (GPNKEVDDDEEDHHE).

As to quaternary structure, trimer of heterotrimers, consisting of subunits alpha, beta and gamma. Requires [4Fe-4S] cluster as cofactor.

It is found in the cell inner membrane. Functionally, formate dehydrogenase allows E.coli to use formate as major electron donor during anaerobic respiration, when nitrate is used as electron acceptor. The beta subunit FdnH is an electron transfer unit containing 4 iron-sulfur clusters; it serves as a conduit for electrons that are transferred from the formate oxidation site in the alpha subunit (FdnG) to the menaquinone associated with the gamma subunit (FdnI) of formate dehydrogenase-N. Formate dehydrogenase-N is part of a system that generates proton motive force, together with the dissimilatory nitrate reductase (Nar). In Escherichia coli (strain K12), this protein is Formate dehydrogenase, nitrate-inducible, iron-sulfur subunit (fdnH).